We begin with the raw amino-acid sequence, 451 residues long: Heat shock factor protein (451 aa).

The DNA-binding element occupies 12–117; the sequence is VPAFLAKLWT…LLENIKRKVN (106 aa). 2 disordered regions span residues 210 to 273 and 285 to 307; these read LNDS…LEAS and LTPSQSPEQSPAPPKLDDTPISP. Over residues 232 to 246 the composition is skewed to polar residues; it reads PSSTSYPVSGFTDSS.

It belongs to the HSF family. As to quaternary structure, homotrimer. Post-translationally, exhibits temperature-dependent phosphorylation.

Its subcellular location is the nucleus. DNA-binding protein that specifically binds heat shock promoter elements (HSE) and activates transcription. The chain is Heat shock factor protein (hsf1) from Xenopus laevis (African clawed frog).